A 795-amino-acid chain; its full sequence is Multiple C2 domain and transmembrane region protein 12 (795 aa).

3 consecutive C2 domains span residues 24 to 142 (RNPR…PQWY), 180 to 298 (VCAS…SAPA), and 341 to 463 (YSSD…TCSY). Ca(2+) contacts are provided by asparagine 57, aspartate 109, and asparagine 113. 4 helical membrane-spanning segments follow: residues 590–610 (CTPK…EYYI), 612–632 (WLVT…VILL), 730–750 (FVLI…CLGW), and 752–772 (LHVR…LPWF).

Belongs to the MCTP family. It depends on Ca(2+) as a cofactor. In terms of tissue distribution, expressed in root vascular tissues and meristems. Observed in flowers.

It is found in the endoplasmic reticulum membrane. Functionally, may function as a signaling molecule by regulating the trafficking of other regulators. The protein is Multiple C2 domain and transmembrane region protein 12 of Arabidopsis thaliana (Mouse-ear cress).